A 299-amino-acid chain; its full sequence is tRNA dimethylallyltransferase (299 aa).

Position 11 to 18 (11 to 18 (GPTAVGKT)) interacts with ATP. 13-18 (TAVGKT) contributes to the substrate binding site. Positions 36–39 (DSQQ) are interaction with substrate tRNA.

Belongs to the IPP transferase family. In terms of assembly, monomer. It depends on Mg(2+) as a cofactor.

The catalysed reaction is adenosine(37) in tRNA + dimethylallyl diphosphate = N(6)-dimethylallyladenosine(37) in tRNA + diphosphate. Its function is as follows. Catalyzes the transfer of a dimethylallyl group onto the adenine at position 37 in tRNAs that read codons beginning with uridine, leading to the formation of N6-(dimethylallyl)adenosine (i(6)A). This Streptococcus pyogenes serotype M12 (strain MGAS2096) protein is tRNA dimethylallyltransferase.